The primary structure comprises 191 residues: Holliday junction branch migration complex subunit RuvA (191 aa).

The domain I stretch occupies residues 1 to 64 (MIGTLSGIIE…DNVPQLYGFT (64 aa)). Residues 65–145 (DTEEQNCLKM…FNIMDKRGPS (81 aa)) are domain II. Positions 146-149 (VEDS) are flexible linker. Residues 149–191 (SDALSALLSLGYEKTRVLNALEKVGVSHNLSDTVRFALKELSK) are domain III.

Belongs to the RuvA family. Homotetramer. Forms an RuvA(8)-RuvB(12)-Holliday junction (HJ) complex. HJ DNA is sandwiched between 2 RuvA tetramers; dsDNA enters through RuvA and exits via RuvB. An RuvB hexamer assembles on each DNA strand where it exits the tetramer. Each RuvB hexamer is contacted by two RuvA subunits (via domain III) on 2 adjacent RuvB subunits; this complex drives branch migration. In the full resolvosome a probable DNA-RuvA(4)-RuvB(12)-RuvC(2) complex forms which resolves the HJ.

The protein resides in the cytoplasm. Its function is as follows. The RuvA-RuvB-RuvC complex processes Holliday junction (HJ) DNA during genetic recombination and DNA repair, while the RuvA-RuvB complex plays an important role in the rescue of blocked DNA replication forks via replication fork reversal (RFR). RuvA specifically binds to HJ cruciform DNA, conferring on it an open structure. The RuvB hexamer acts as an ATP-dependent pump, pulling dsDNA into and through the RuvAB complex. HJ branch migration allows RuvC to scan DNA until it finds its consensus sequence, where it cleaves and resolves the cruciform DNA. In Anaplasma phagocytophilum (strain HZ), this protein is Holliday junction branch migration complex subunit RuvA.